A 151-amino-acid chain; its full sequence is FIS1-related protein fis-2 (151 aa).

Residues 126 to 146 (LIGAAIVGGGALALAGLVAIF) form a helical membrane-spanning segment.

The protein belongs to the FIS1 family.

The protein resides in the mitochondrion outer membrane. It localises to the peroxisome membrane. It is found in the mitochondrion. Its function is as follows. Involved in the fragmentation of the mitochondrial network. Involved in perinuclear clustering of the mitochondrial network. May act, redundantly with fis-1, downstream of mitochondrial fission, before the fission products participate in mitochondrial homeostasis, mitophagy, or apoptosis. Plays a role in apoptosis by promoting mitochondrial elimination and cell-death execution, acting downstream of caspase ced-3, and perhaps independently of dynamin GTPase drp-1, caspase ced-9 and apoptosis-inducing factor AIFM/wah-1. This Caenorhabditis elegans protein is FIS1-related protein fis-2.